The following is a 382-amino-acid chain: 1-deoxy-D-xylulose 5-phosphate reductoisomerase (382 aa).

NADPH-binding residues include Ser10, Gly11, Ser12, Ile13, Gly36, Lys37, Asn38, and Asn121. Lys122 lines the 1-deoxy-D-xylulose 5-phosphate pocket. Glu123 is a binding site for NADPH. A Mn(2+)-binding site is contributed by Asp147. 1-deoxy-D-xylulose 5-phosphate-binding residues include Ser148, Glu149, Ser173, and His196. Position 149 (Glu149) interacts with Mn(2+). An NADPH-binding site is contributed by Gly202. Ser209, Asn214, Lys215, and Glu218 together coordinate 1-deoxy-D-xylulose 5-phosphate. Mn(2+) is bound at residue Glu218.

This sequence belongs to the DXR family. It depends on Mg(2+) as a cofactor. Mn(2+) is required as a cofactor.

It catalyses the reaction 2-C-methyl-D-erythritol 4-phosphate + NADP(+) = 1-deoxy-D-xylulose 5-phosphate + NADPH + H(+). It participates in isoprenoid biosynthesis; isopentenyl diphosphate biosynthesis via DXP pathway; isopentenyl diphosphate from 1-deoxy-D-xylulose 5-phosphate: step 1/6. In terms of biological role, catalyzes the NADPH-dependent rearrangement and reduction of 1-deoxy-D-xylulose-5-phosphate (DXP) to 2-C-methyl-D-erythritol 4-phosphate (MEP). The protein is 1-deoxy-D-xylulose 5-phosphate reductoisomerase of Geobacillus kaustophilus (strain HTA426).